The sequence spans 352 residues: Divinyl chlorophyll a/b light-harvesting protein PcbB (352 aa).

A run of 6 helical transmembrane segments spans residues Phe27–Leu47, Cys89–Leu109, Phe142–Ala162, Val203–Ile223, Ala243–Ser263, and Leu307–Leu327.

Belongs to the PsbB/PsbC family. IsiA/Pcb subfamily. In terms of assembly, the antenna complex consists of divinyl chlorophylls (a and b) and divinyl chlorophyll a/b binding proteins and binds more divinyl chlorophyll b than does the antenna complex from high-light-adapted Prochlorococcus. Divinyl chlorophyll a is required as a cofactor. It depends on divinyl chlorophyll b as a cofactor.

It is found in the cellular thylakoid membrane. Functionally, the antenna complex functions as a light receptor, it captures and delivers excitation energy to photosystems II and I. The Prochlorales pcb genes are not related to higher plant LHCs. The chain is Divinyl chlorophyll a/b light-harvesting protein PcbB (pcbB) from Prochlorococcus marinus (strain NATL2A).